Here is a 295-residue protein sequence, read N- to C-terminus: Ribosomal protein L11 methyltransferase (295 aa).

S-adenosyl-L-methionine is bound by residues threonine 150, glycine 171, aspartate 193, and asparagine 232.

It belongs to the methyltransferase superfamily. PrmA family.

Its subcellular location is the cytoplasm. The catalysed reaction is L-lysyl-[protein] + 3 S-adenosyl-L-methionine = N(6),N(6),N(6)-trimethyl-L-lysyl-[protein] + 3 S-adenosyl-L-homocysteine + 3 H(+). Methylates ribosomal protein L11. This is Ribosomal protein L11 methyltransferase from Neisseria meningitidis serogroup C / serotype 2a (strain ATCC 700532 / DSM 15464 / FAM18).